A 319-amino-acid chain; its full sequence is Glutathione synthetase (319 aa).

An ATP-grasp domain is found at 125-311; the sequence is KLFTAWFPEL…ITGMLMDAIE (187 aa). 151–207 lines the ATP pocket; it reads HQEHGDIILKPLDGMGGTSIFRVKQDDPNLSVIIETLTELSSRFCMAQNFLPAIKEG. The Mg(2+) site is built by E281 and N283.

This sequence belongs to the prokaryotic GSH synthase family. The cofactor is Mg(2+). Requires Mn(2+) as cofactor.

The catalysed reaction is gamma-L-glutamyl-L-cysteine + glycine + ATP = glutathione + ADP + phosphate + H(+). Its pathway is sulfur metabolism; glutathione biosynthesis; glutathione from L-cysteine and L-glutamate: step 2/2. This is Glutathione synthetase from Yersinia pestis.